We begin with the raw amino-acid sequence, 326 residues long: Amino acid--[acyl-carrier-protein] ligase 1 (326 aa).

Cys-131 is a Zn(2+) binding site. ATP-binding positions include Arg-159, Glu-161, and 168-169; that span reads RL. Zn(2+) is bound at residue Glu-176. An an L-alpha-amino acid-binding site is contributed by Glu-176. Residues Lys-235 and 250–253 each bind ATP; that span reads ACMS. Cys-279 contributes to the Zn(2+) binding site. An ATP-binding site is contributed by Arg-286.

Belongs to the class-II aminoacyl-tRNA synthetase family. Amino acid--[acyl-carrier-protein] ligase subfamily. In terms of assembly, homodimer. It depends on Zn(2+) as a cofactor.

It catalyses the reaction an L-alpha-amino acid + holo-[ACP] + ATP = an L-alpha-aminoacyl-[ACP] + AMP + diphosphate. Its function is as follows. Catalyzes the ATP-dependent activation of L-glycine and its transfer to the phosphopantetheine prosthetic group covalently attached to the vicinal carrier protein bsr0959 of yet unknown function. May participate in nonribosomal peptide synthesis or related processes. L-alanine is a poor substrate whereas L-serine or D-amino acids are not substrates for ATP-dependent activation. Does not display tRNA aminoacylation activity. In Bradyrhizobium diazoefficiens (strain JCM 10833 / BCRC 13528 / IAM 13628 / NBRC 14792 / USDA 110), this protein is Amino acid--[acyl-carrier-protein] ligase 1.